Reading from the N-terminus, the 490-residue chain is Betaine aldehyde dehydrogenase (490 aa).

NAD(+) contacts are provided by residues Lys-174, Glu-177, and Gly-227–Gly-232. Residues Glu-249 and Cys-283 contribute to the active site. Glu-384 serves as a coordination point for NAD(+).

The protein belongs to the aldehyde dehydrogenase family. In terms of assembly, homodimer.

It carries out the reaction betaine aldehyde + NAD(+) + H2O = glycine betaine + NADH + 2 H(+). Its pathway is amine and polyamine biosynthesis; betaine biosynthesis via choline pathway; betaine from betaine aldehyde: step 1/1. With respect to regulation, activity is stimulated by low concentrations of salts and by moderate concentrations of glycine betaine. Highly tolerant to high ionic conditions. In vitro, activity is highly stimulated in the presence of proline. Its function is as follows. Involved in the biosynthesis of the osmoprotectant glycine betaine from choline. Catalyzes the oxidation of betaine aldehyde to betaine. Shows specificity for betaine aldehyde as substrate. Can use both NAD(+) and NADP(+), but NAD(+) is strongly preferred. The sequence is that of Betaine aldehyde dehydrogenase from Bacillus subtilis (strain 168).